A 353-amino-acid polypeptide reads, in one-letter code: MLAIGIIRSMKTDDFDFHLPDELIAQFPLANRSDSRMLYVNGKHADLRDAAFRNLPDYLKRGDVIVLNNTRVVKARLSGVKSTGGKVEVMVERILDTHRARVLIRASHALVIGSTLLLENKITAQVEAREQDIYTLCFMHSLPLIELLDQFGHTPLPPYIGRNATVSDENRYQTVFAQESGAVAAPTAGLHFDETMLQTLRTLGVKIIYVTLHVGAGTFQPVRVQNIDQHVMHTEPYHIPTETVEAIQMCKSAGGSVLAVGTTSLRALESCMLTNDGTLVAGAGETNLFITPGFRFRIVDRLLTNFHLPRSTLLMLVSAFAGMETIRHAYRHAIDNHYRFFSYGDAMLIDSQP.

This sequence belongs to the QueA family. In terms of assembly, monomer.

Its subcellular location is the cytoplasm. It carries out the reaction 7-aminomethyl-7-carbaguanosine(34) in tRNA + S-adenosyl-L-methionine = epoxyqueuosine(34) in tRNA + adenine + L-methionine + 2 H(+). The protein operates within tRNA modification; tRNA-queuosine biosynthesis. Transfers and isomerizes the ribose moiety from AdoMet to the 7-aminomethyl group of 7-deazaguanine (preQ1-tRNA) to give epoxyqueuosine (oQ-tRNA). This is S-adenosylmethionine:tRNA ribosyltransferase-isomerase from Nitrosomonas europaea (strain ATCC 19718 / CIP 103999 / KCTC 2705 / NBRC 14298).